The chain runs to 524 residues: mRNA cap guanine-N(7) methyltransferase (524 aa).

The segment at 1-155 is disordered; the sequence is MSDKEAGVAS…DKKRAHDEAE (155 aa). Residues 19 to 40 are compositionally biased toward basic and acidic residues; that stretch reads NKDEVDVKNTEEHSKQESKSDI. Polar residues predominate over residues 68–77; the sequence is NNKVISSVYN. A compositionally biased stretch (basic and acidic residues) spans 90 to 99; the sequence is KTTDKYDKYG. Positions 100–112 are enriched in polar residues; that stretch reads SRSTPIATPTAPV. The region spanning 214 to 522 is the mRNA cap 0 methyltransferase domain; the sequence is SPIYKLRNFN…FYIGFVFEKL (309 aa). Residue 223–224 participates in mRNA binding; the sequence is NN. The S-adenosyl-L-methionine site is built by Lys227, Cys251, Asp273, Asp319, Gln349, and Tyr354.

The protein belongs to the class I-like SAM-binding methyltransferase superfamily. mRNA cap 0 methyltransferase family.

It localises to the nucleus. The enzyme catalyses a 5'-end (5'-triphosphoguanosine)-ribonucleoside in mRNA + S-adenosyl-L-methionine = a 5'-end (N(7)-methyl 5'-triphosphoguanosine)-ribonucleoside in mRNA + S-adenosyl-L-homocysteine. Functionally, responsible for methylating the 5'-cap structure of mRNAs. In Debaryomyces hansenii (strain ATCC 36239 / CBS 767 / BCRC 21394 / JCM 1990 / NBRC 0083 / IGC 2968) (Yeast), this protein is mRNA cap guanine-N(7) methyltransferase (ABD1).